We begin with the raw amino-acid sequence, 67 residues long: Large ribosomal subunit protein bL35 (67 aa).

The interval 22 to 45 (GKIKRWKSGGAHYNTKKSSKRKRH) is disordered. Over residues 35-45 (NTKKSSKRKRH) the composition is skewed to basic residues.

It belongs to the bacterial ribosomal protein bL35 family.

The polypeptide is Large ribosomal subunit protein bL35 (Aquifex aeolicus (strain VF5)).